We begin with the raw amino-acid sequence, 745 residues long: MSLITRLLTGNNTLRLRALKSLGKAGYSSHAKFSEHKPIERIRNIGISAHIDSGKTTLTERILFYTGRIAEMHEVRGKDNVGATMDSMELERQRGITIQSAATYTLWKDTNINIIDTPGHVDFTVEVERALRVLDGAVLVLCAVGGVQSQTLTVNRQMKRYNVPCLAFINKLDRLGSNPYRVLSQMRSKMNHNAAFIQLPIGVESNCKGIVDLVREKAIYFEGEHGMDIRLDEIPQDMRVESLERRQELIEHLSNADETLGELFLEEKPFTEDDIKAALRRTCINRTFTPVLVGTALKNKGVQPLLDAVLDYLPNPGEVENLGFIEKEGQDPEKVVLNPARDGKDPFVGLAFKLEAGRFGQLTYLRCYQGVLRKGDNIFNARTNKKVRIARLVRLHSNQMEDVNEVYAGDIFALFGVDCASGDTFTTNPKNNLSMESIFVPEPVVSMAIKPNNTKDRDNFSKAIARFTKEDPTFHFFFDNDVKETLVSGMGELHLEIYAQRMEREYGCPVTLGKPKVAFRETLVGPCEFDYLHKKQSGGSGQYARIIGVMEPLPPNQNTLLEFVDETVGTNVPKQFVPGVEKGYREMAEKGMLSGHKLSGIRFRLQDGGHHIVDSSELAFMLAAHGAIKEVFQNGSWQILEPIMLVEVTAPEEFQGAVMGHLSKRHGIITGTEGTEGWFTVYAEVPLNDMFGYAGELRSSTQGKGEFTMEYSRYSPCLPDVQDQIVRQYQESQGLAQPDKKKKKN.

A tr-type G domain is found at 40–317 (ERIRNIGISA…AVLDYLPNPG (278 aa)). GTP is bound by residues 49-56 (AHIDSGKT), 116-120 (DTPGH), and 170-173 (NKLD).

Belongs to the TRAFAC class translation factor GTPase superfamily. Classic translation factor GTPase family. EF-G/EF-2 subfamily.

Its subcellular location is the mitochondrion. It functions in the pathway protein biosynthesis; polypeptide chain elongation. Functionally, mitochondrial GTPase that catalyzes the GTP-dependent ribosomal translocation step during translation elongation. During this step, the ribosome changes from the pre-translocational (PRE) to the post-translocational (POST) state as the newly formed A-site-bound peptidyl-tRNA and P-site-bound deacylated tRNA move to the P and E sites, respectively. Catalyzes the coordinated movement of the two tRNA molecules, the mRNA and conformational changes in the ribosome. Essential during development as it acts as a retrograde signal from mitochondria to the nucleus to slow down cell proliferation if mitochondrial energy output is low. The chain is Elongation factor G, mitochondrial from Drosophila melanogaster (Fruit fly).